Here is a 91-residue protein sequence, read N- to C-terminus: Small ribosomal subunit protein bS16 (91 aa).

The protein belongs to the bacterial ribosomal protein bS16 family.

The sequence is that of Small ribosomal subunit protein bS16 from Phytoplasma australiense.